The primary structure comprises 156 residues: Aspartate carbamoyltransferase regulatory chain (156 aa).

4 residues coordinate Zn(2+): C109, C114, C140, and C143.

The protein belongs to the PyrI family. Contains catalytic and regulatory chains. It depends on Zn(2+) as a cofactor.

Functionally, involved in allosteric regulation of aspartate carbamoyltransferase. This is Aspartate carbamoyltransferase regulatory chain from Methanosarcina acetivorans (strain ATCC 35395 / DSM 2834 / JCM 12185 / C2A).